Here is a 1262-residue protein sequence, read N- to C-terminus: Histone-lysine N-methyltransferase eggless (1262 aa).

The tract at residues 1–194 (MSGQPTAVDC…MEVDQDVEES (194 aa)) is disordered. 3 stretches are compositionally biased toward basic and acidic residues: residues 26 to 41 (ASRE…KGEN), 50 to 61 (AAKDVEIEELTH), and 81 to 99 (APDE…KGEN). Residues 157-166 (SSISSPTSES) show a composition bias toward low complexity. A compositionally biased stretch (basic and acidic residues) spans 167-179 (FPEKDEKTNKENE). S215 carries the post-translational modification Phosphoserine. T217 is modified (phosphothreonine). A coiled-coil region spans residues 353-420 (EKSDFSKNKL…LEKVQTTADK (68 aa)). Tudor domains are found at residues 529 to 602 (RLTI…SEKV) and 629 to 686 (QCTR…RETQ). The tract at residues 743–764 (SSAATPAGGRTNAGGVSTSNSA) is disordered. An MBD domain is found at 818–884 (LDSYSPLAKP…DNFDFTPDLK (67 aa)). The Pre-SET domain occupies 946-1018 (LCCDCEDDCS…NCLNRVVQFS (73 aa)). The Zn(2+) site is built by C948, C950, C954, C960, C962, C1000, C1004, C1006, and C1010. The region spanning 1021–1237 (MKLQVFKTSN…SGTELTWNYN (217 aa)) is the SET domain. Residues 1031–1033 (RGW), D1069, and Y1071 each bind S-adenosyl-L-methionine. A compositionally biased stretch (basic and acidic residues) spans 1086–1097 (EGYESEVDHSDP). Residues 1086–1148 (EGYESEVDHS…QSSELDSQER (63 aa)) form a disordered region. The segment covering 1098–1113 (DAEEDNGGPDAEDDDD) has biased composition (acidic residues). Over residues 1129–1141 (RSGSTQNSSTQSS) the composition is skewed to low complexity. S-adenosyl-L-methionine is bound by residues R1191 and 1194–1195 (NH). Positions 1197, 1250, 1252, and 1257 each coordinate Zn(2+). The region spanning 1246–1262 (KVLYCQCGAPNCRLRLL) is the Post-SET domain.

This sequence belongs to the class V-like SAM-binding methyltransferase superfamily. Histone-lysine methyltransferase family. Suvar3-9 subfamily. In terms of tissue distribution, expressed in ovary (at protein level).

The protein resides in the nucleus. It localises to the chromosome. The enzyme catalyses L-lysyl(9)-[histone H3] + 3 S-adenosyl-L-methionine = N(6),N(6),N(6)-trimethyl-L-lysyl(9)-[histone H3] + 3 S-adenosyl-L-homocysteine + 3 H(+). In terms of biological role, histone methyltransferase that specifically trimethylates 'Lys-10' of histone H3 (H3K9me3) in ovary. H3K9me3 represents a specific tag for epigenetic transcriptional repression by recruiting Su(var)205/HP1 to methylated histones. Plays a central role during oogenesis. This chain is Histone-lysine N-methyltransferase eggless (egg), found in Drosophila melanogaster (Fruit fly).